We begin with the raw amino-acid sequence, 277 residues long: Large ribosomal subunit protein uL2 (277 aa).

Positions 222–259 (GSVMNPNDHPHGGGEGKSPVGRPSPVTPWGKPALGYKT) are disordered.

It belongs to the universal ribosomal protein uL2 family. As to quaternary structure, part of the 50S ribosomal subunit. Forms a bridge to the 30S subunit in the 70S ribosome.

In terms of biological role, one of the primary rRNA binding proteins. Required for association of the 30S and 50S subunits to form the 70S ribosome, for tRNA binding and peptide bond formation. It has been suggested to have peptidyltransferase activity; this is somewhat controversial. Makes several contacts with the 16S rRNA in the 70S ribosome. The protein is Large ribosomal subunit protein uL2 of Clostridium beijerinckii (strain ATCC 51743 / NCIMB 8052) (Clostridium acetobutylicum).